We begin with the raw amino-acid sequence, 51 residues long: Large ribosomal subunit protein eL39 (51 aa).

This sequence belongs to the eukaryotic ribosomal protein eL39 family.

The sequence is that of Large ribosomal subunit protein eL39 from Methanosarcina barkeri (strain Fusaro / DSM 804).